The sequence spans 516 residues: Zinc finger protein 83 (516 aa).

Positions 1 to 20 are disordered; the sequence is MHGRKDDAQKQPVKNQLGLN. A C2H2-type 1; degenerate zinc finger spans residues 93-115; sequence YKCSERGKAFHQGLHFTIHQIIH. 14 consecutive C2H2-type zinc fingers follow at residues 121 to 143, 149 to 171, 177 to 199, 205 to 227, 233 to 255, 261 to 283, 289 to 311, 317 to 339, 345 to 367, 373 to 395, 401 to 423, 429 to 451, 457 to 479, and 485 to 507; these read FKCDICGKIFNKKSNLASHQRIH, YKCNECGKVFHNMSHLAQHRRIH, YKCNECGKVFNQISHLAQHQRIH, YKCNECGKVFHQISHLAQHRTIH, YECNKCGKVFSRNSYLVQHLIIH, YRCNVCGKVFHHISHLAQHQRIH, YKCNECGKVFSHKSSLVNHWRIH, YKCNECGKVFSRNSYLAQHLIIH, YKCDECDKAFSQNSHLVQHHRIH, YKCDECGKVFSQNSYLAYHWRIH, YKCNECGKVFGLNSSLAHHRKIH, FKCNECGKAFSMRSSLTNHHAIH, and FKCNECGKLFRDNSYLVRHQRFH.

The protein belongs to the krueppel C2H2-type zinc-finger protein family.

It localises to the nucleus. Its function is as follows. May be involved in transcriptional regulation. The protein is Zinc finger protein 83 (ZNF83) of Homo sapiens (Human).